The primary structure comprises 162 residues: Urease subunit beta (162 aa).

A disordered region spans residues 116–162 (WRRSSAAGDAPQELPQVEAAERGRKLDDATDVDTNVGTEEGFEEGRN). Over residues 134–143 (AAERGRKLDD) the composition is skewed to basic and acidic residues.

The protein belongs to the urease beta subunit family. In terms of assembly, heterotrimer of UreA (gamma), UreB (beta) and UreC (alpha) subunits. Three heterotrimers associate to form the active enzyme.

The protein localises to the cytoplasm. The enzyme catalyses urea + 2 H2O + H(+) = hydrogencarbonate + 2 NH4(+). It functions in the pathway nitrogen metabolism; urea degradation; CO(2) and NH(3) from urea (urease route): step 1/1. In Corynebacterium glutamicum (strain ATCC 13032 / DSM 20300 / JCM 1318 / BCRC 11384 / CCUG 27702 / LMG 3730 / NBRC 12168 / NCIMB 10025 / NRRL B-2784 / 534), this protein is Urease subunit beta.